Here is a 454-residue protein sequence, read N- to C-terminus: tRNA modification GTPase MnmE (454 aa).

Arg-23, Glu-80, and Lys-120 together coordinate (6S)-5-formyl-5,6,7,8-tetrahydrofolate. Residues 216–377 (GMKVVIAGRP…LRNHLKQSMG (162 aa)) enclose the TrmE-type G domain. Position 226 (Asn-226) interacts with K(+). GTP is bound by residues 226–231 (NAGKSS), 245–251 (TDIAGTT), 270–273 (DTAG), 335–338 (NKAD), and 358–360 (SAR). Residue Ser-230 participates in Mg(2+) binding. 3 residues coordinate K(+): Thr-245, Ile-247, and Thr-250. Thr-251 contacts Mg(2+). Lys-454 contributes to the (6S)-5-formyl-5,6,7,8-tetrahydrofolate binding site.

This sequence belongs to the TRAFAC class TrmE-Era-EngA-EngB-Septin-like GTPase superfamily. TrmE GTPase family. Homodimer. Heterotetramer of two MnmE and two MnmG subunits. It depends on K(+) as a cofactor.

Its subcellular location is the cytoplasm. In terms of biological role, exhibits a very high intrinsic GTPase hydrolysis rate. Involved in the addition of a carboxymethylaminomethyl (cmnm) group at the wobble position (U34) of certain tRNAs, forming tRNA-cmnm(5)s(2)U34. The polypeptide is tRNA modification GTPase MnmE (Salmonella gallinarum (strain 287/91 / NCTC 13346)).